We begin with the raw amino-acid sequence, 141 residues long: Methylglyoxal synthase (141 aa).

The MGS-like domain maps to 1-141; it reads MNIALIAHDK…PKLQKNKSDK (141 aa). Residues histidine 8, lysine 12, and 34–37 each bind substrate; that span reads TGTT. Catalysis depends on aspartate 60, which acts as the Proton donor/acceptor. Histidine 87 contacts substrate.

The protein belongs to the methylglyoxal synthase family.

It carries out the reaction dihydroxyacetone phosphate = methylglyoxal + phosphate. Catalyzes the formation of methylglyoxal from dihydroxyacetone phosphate. In Caldicellulosiruptor bescii (strain ATCC BAA-1888 / DSM 6725 / KCTC 15123 / Z-1320) (Anaerocellum thermophilum), this protein is Methylglyoxal synthase.